The primary structure comprises 115 residues: Secreted RxLR effector protein 2 (115 aa).

The N-terminal stretch at 1 to 22 is a signal peptide; the sequence is MICRSPLIVVMLFVIAAHTVLA. Residues 57–82 carry the RxLR-dEER motif; that stretch reads RFLRQETTFEKKLGVNDVHAVHAEER.

This sequence belongs to the RxLR effector family.

The protein localises to the secreted. It is found in the host cytoplasm. Its subcellular location is the host nucleus. Effector that acts as a broad suppressor of cell death to interrupt plant immunity. Inhibits cell death induced by cell death-inducing proteins, including the PAMP elicitor INF1 from P.infestans. The protein is Secreted RxLR effector protein 2 of Plasmopara viticola (Downy mildew of grapevine).